Here is an 89-residue protein sequence, read N- to C-terminus: Small ribosomal subunit protein uS15 (89 aa).

It belongs to the universal ribosomal protein uS15 family. As to quaternary structure, part of the 30S ribosomal subunit. Forms a bridge to the 50S subunit in the 70S ribosome, contacting the 23S rRNA.

One of the primary rRNA binding proteins, it binds directly to 16S rRNA where it helps nucleate assembly of the platform of the 30S subunit by binding and bridging several RNA helices of the 16S rRNA. Its function is as follows. Forms an intersubunit bridge (bridge B4) with the 23S rRNA of the 50S subunit in the ribosome. The protein is Small ribosomal subunit protein uS15 of Lactococcus lactis subsp. lactis (strain IL1403) (Streptococcus lactis).